Consider the following 1220-residue polypeptide: Plasma membrane calcium-transporting ATPase 1 (1220 aa).

The residue at position 2 (G2) is an N-acetylglycine. Topologically, residues 2–105 (GDMANNSVAY…KTFLQLVWEA (104 aa)) are cytoplasmic. S8 and S17 each carry phosphoserine. A helical membrane pass occupies residues 106 to 126 (LQDVTLIILEIAAIVSLGLSF). Residues 127–154 (YQPPEGDNALCGEVSVGEEEGEGETGWI) are Extracellular-facing. A helical transmembrane segment spans residues 155–175 (EGAAILLSVVCVVLVTAFNDW). Topologically, residues 176-366 (SKEKQFRGLQ…KEKSVLQGKL (191 aa)) are cytoplasmic. Residues 297-356 (EEEKKDEKKKEKKNKKQDGAIENRNKAKAQDGAAMEMQPLKSEEGGDGDEKDKKKANLPK) are disordered. Composition is skewed to basic and acidic residues over residues 312 to 325 (KQDGAIENRNKAKA) and 337 to 356 (KSEEGGDGDEKDKKKANLPK). A Phosphoserine modification is found at S338. Residues 367-386 (TKLAVQIGKAGLLMSAITVI) form a helical membrane-spanning segment. At 387 to 418 (ILVLYFVIDTFWVQKRPWLAECTPIYIQYFVK) the chain is on the extracellular side. A helical transmembrane segment spans residues 419–439 (FFIIGVTVLVVAVPEGLPLAV). The Cytoplasmic portion of the chain corresponds to 440–855 (TISLAYSVKK…RNVYDSISKF (416 aa)). D475 (4-aspartylphosphate intermediate) is an active-site residue. The Mg(2+) site is built by D475, T477, D797, and D801. The helical transmembrane segment at 856–876 (LQFQLTVNVVAVIVAFTGACI) threads the bilayer. The Extracellular segment spans residues 877–882 (TQDSPL). The helical transmembrane segment at 883–903 (KAVQMLWVNLIMDTLASLALA) threads the bilayer. Over 904–927 (TEPPTESLLLRKPYGRNKPLISRT) the chain is Cytoplasmic. The chain crosses the membrane as a helical span at residues 928 to 948 (MMKNILGHAFYQLVVVFTLLF). Residues 949–971 (AGEKFFDIDSGRNAPLHAPPSEH) are Extracellular-facing. A helical transmembrane segment spans residues 972–991 (YTIVFNTFVLMQLFNEINAR). The Cytoplasmic segment spans residues 992 to 1005 (KIHGERNVFEGIFN). Residues 1006–1027 (NAIFCTIVLGTFVVQIIIVQFG) form a helical membrane-spanning segment. Over 1028–1039 (GKPFSCSELSIE) the chain is Extracellular. The helical transmembrane segment at 1040 to 1060 (QWLWSIFLGMGTLLWGQLIST) threads the bilayer. Residues 1061–1220 (IPTSRLKFLK…SPLHSLETSL (160 aa)) are Cytoplasmic-facing. The calmodulin-binding subdomain A stretch occupies residues 1100–1117 (LRRGQILWFRGLNRIQTQ). Residue T1116 is modified to Phosphothreonine; by PKC. Residues 1118–1127 (IRVVNAFRSS) form a calmodulin-binding subdomain B region. Positions 1118-1220 (IRVVNAFRSS…SPLHSLETSL (103 aa)) are required for basolateral membrane targeting. A phosphoserine mark is found at S1140 and S1155. The tract at residues 1160–1220 (PLIDDTDAED…SPLHSLETSL (61 aa)) is disordered. T1165 bears the Phosphothreonine mark. Phosphoserine occurs at positions 1178 and 1182. Positions 1200–1220 (MNKSATSSSPGSPLHSLETSL) are enriched in polar residues.

The protein belongs to the cation transport ATPase (P-type) (TC 3.A.3) family. Type IIB subfamily. In terms of assembly, monomer. Dimer. Oligomer. Calmodulin binding. Interacts with PDZD11. Interacts with SLC35G1 and STIM1. Interacts with YWHAE; interacts with the monomeric and dimeric forms of the YWHAE but prefer the monomer form; this interaction inhibits calcium-transporting ATPase activity. Interacts with NPTN; this interaction stabilizes ATP2B1 and increases ATPase activity; this interaction controls T cell calcium homeostasis following T cell activation. Interacts with EPB41; regulates small intestinal calcium absorption through regulation of membrane expression of ATP2B1.

It is found in the cell membrane. The protein resides in the basolateral cell membrane. It localises to the synapse. Its subcellular location is the presynaptic cell membrane. The protein localises to the cytoplasmic vesicle. It is found in the secretory vesicle. The protein resides in the synaptic vesicle membrane. The enzyme catalyses Ca(2+)(in) + ATP + H2O = Ca(2+)(out) + ADP + phosphate + H(+). Catalyzes the hydrolysis of ATP coupled with the transport of calcium from the cytoplasm to the extracellular space thereby maintaining intracellular calcium homeostasis. Plays a role in blood pressure regulation through regulation of intracellular calcium concentration and nitric oxide production leading to regulation of vascular smooth muscle cells vasoconstriction. Positively regulates bone mineralization through absorption of calcium from the intestine. Plays dual roles in osteoclast differentiation and survival by regulating RANKL-induced calcium oscillations in preosteoclasts and mediating calcium extrusion in mature osteoclasts. Regulates insulin sensitivity through calcium/calmodulin signaling pathway by regulating AKT1 activation and NOS3 activation in endothelial cells. May play a role in synaptic transmission by modulating calcium and proton dynamics at the synaptic vesicles. In Sus scrofa (Pig), this protein is Plasma membrane calcium-transporting ATPase 1.